The primary structure comprises 422 residues: MLDARYIRENLETVEARLKTRGEGVDIALFKELDGRRRELLQQSETLKALRNKVTEEIARLQDKSQAAERKTEMREVSQQIKGIDESLRSVEEELQNFLLTVPNVPNETTPIGRSEEDNVVVRTWGEVPALSFEPKPHWEIGEGLGILDFERGAKLAGARFTLYRGAGARLERALINYMLDLHIDEHKYIEMLPPFMVNRECMTGTGQLPKFEEDLFHMEGVDFFLIPTAEVPVTNIHRGEILKGSDLPISYVAYTPCFRKEAGSYGKDTRGLIRQHQFNKVELVKFTSPEDSYEQLQKLLGHAEEVLRRLQIPYRVVELCTGDIGFSAAKTFDIEVWLPGQNCYREISSCSCFEDFQARRAGIRFRPEEKAKPEFVHTLNGSGLAVGRTLVAVLENYQQADGSVLIPEVLRPYMGGAERIS.

229–231 (TAE) is a binding site for L-serine. 260–262 (RKE) is an ATP binding site. Glu-283 lines the L-serine pocket. 347–350 (EISS) serves as a coordination point for ATP. Ser-383 provides a ligand contact to L-serine.

It belongs to the class-II aminoacyl-tRNA synthetase family. Type-1 seryl-tRNA synthetase subfamily. In terms of assembly, homodimer. The tRNA molecule binds across the dimer.

It is found in the cytoplasm. It carries out the reaction tRNA(Ser) + L-serine + ATP = L-seryl-tRNA(Ser) + AMP + diphosphate + H(+). It catalyses the reaction tRNA(Sec) + L-serine + ATP = L-seryl-tRNA(Sec) + AMP + diphosphate + H(+). It participates in aminoacyl-tRNA biosynthesis; selenocysteinyl-tRNA(Sec) biosynthesis; L-seryl-tRNA(Sec) from L-serine and tRNA(Sec): step 1/1. Its function is as follows. Catalyzes the attachment of serine to tRNA(Ser). Is also able to aminoacylate tRNA(Sec) with serine, to form the misacylated tRNA L-seryl-tRNA(Sec), which will be further converted into selenocysteinyl-tRNA(Sec). The sequence is that of Serine--tRNA ligase from Geobacter sp. (strain M21).